We begin with the raw amino-acid sequence, 308 residues long: Putative gluconeogenesis factor (308 aa).

Belongs to the gluconeogenesis factor family.

Its subcellular location is the cytoplasm. In terms of biological role, required for morphogenesis under gluconeogenic growth conditions. This is Putative gluconeogenesis factor from Pasteurella multocida (strain Pm70).